The primary structure comprises 706 residues: GDNF-inducible zinc finger protein 1 (706 aa).

One can recognise a BTB domain in the interval 31-103; sequence CDVTVSIENQ…VYTAKVRVEE (73 aa). Positions 149–165 are enriched in polar residues; the sequence is VEASSGPQVSVTPSSKA. Disordered regions lie at residues 149 to 220 and 242 to 308; these read VEAS…PKIR and RRLR…KDGE. Basic and acidic residues-rich tracts occupy residues 197-212 and 242-277; these read PSKK…KDVA and RRLR…EPAA. 10 consecutive C2H2-type zinc fingers follow at residues 315 to 337, 346 to 369, 375 to 398, 405 to 427, 433 to 455, 461 to 483, 489 to 511, 517 to 539, 545 to 567, and 573 to 595; these read FQCT…IKYH, YRCD…RHVH, FPCE…LQVH, HRCG…ERTH, YGCT…LRVH, FVCD…KRCH, FMCE…NRIH, FKCE…IKVH, YCCD…HRIH, and YMCN…TSIH. Residue S611 is modified to Phosphoserine.

The protein belongs to the krueppel C2H2-type zinc-finger protein family. In terms of assembly, interacts with NCL. Expressed in several tissues, with highest levels in liver. Also expressed in embryos from 7 to 17 dpc.

It is found in the nucleus. It localises to the cytoplasm. The protein resides in the nucleolus. Transcriptional repressor that binds the GZF1 responsive element (GRE) (consensus: 5'-TGCGCN[TG][CA]TATA-3'). May be regulating VSX2/HOX10 expression. This chain is GDNF-inducible zinc finger protein 1, found in Mus musculus (Mouse).